Here is a 259-residue protein sequence, read N- to C-terminus: Acyl-[acyl-carrier-protein]--UDP-N-acetylglucosamine O-acyltransferase (259 aa).

It belongs to the transferase hexapeptide repeat family. LpxA subfamily. In terms of assembly, homotrimer.

It localises to the cytoplasm. The catalysed reaction is a (3R)-hydroxyacyl-[ACP] + UDP-N-acetyl-alpha-D-glucosamine = a UDP-3-O-[(3R)-3-hydroxyacyl]-N-acetyl-alpha-D-glucosamine + holo-[ACP]. The protein operates within glycolipid biosynthesis; lipid IV(A) biosynthesis; lipid IV(A) from (3R)-3-hydroxytetradecanoyl-[acyl-carrier-protein] and UDP-N-acetyl-alpha-D-glucosamine: step 1/6. Functionally, involved in the biosynthesis of lipid A, a phosphorylated glycolipid that anchors the lipopolysaccharide to the outer membrane of the cell. The sequence is that of Acyl-[acyl-carrier-protein]--UDP-N-acetylglucosamine O-acyltransferase from Psychrobacter sp. (strain PRwf-1).